Reading from the N-terminus, the 682-residue chain is DNA-directed RNA polymerase subunit beta' (682 aa).

Residues Cys-69, Cys-71, Cys-87, and Cys-90 each coordinate Zn(2+). Positions 489, 491, and 493 each coordinate Mg(2+).

The protein belongs to the RNA polymerase beta' chain family. RpoC1 subfamily. As to quaternary structure, in plastids the minimal PEP RNA polymerase catalytic core is composed of four subunits: alpha, beta, beta', and beta''. When a (nuclear-encoded) sigma factor is associated with the core the holoenzyme is formed, which can initiate transcription. It depends on Mg(2+) as a cofactor. Zn(2+) is required as a cofactor.

The protein localises to the plastid. It localises to the chloroplast. It catalyses the reaction RNA(n) + a ribonucleoside 5'-triphosphate = RNA(n+1) + diphosphate. Its function is as follows. DNA-dependent RNA polymerase catalyzes the transcription of DNA into RNA using the four ribonucleoside triphosphates as substrates. This chain is DNA-directed RNA polymerase subunit beta', found in Brachypodium distachyon (Purple false brome).